We begin with the raw amino-acid sequence, 311 residues long: Pyrimidine-specific ribonucleoside hydrolase RihA (311 aa).

The active site involves His240.

This sequence belongs to the IUNH family. RihA subfamily.

Functionally, hydrolyzes cytidine or uridine to ribose and cytosine or uracil, respectively. This chain is Pyrimidine-specific ribonucleoside hydrolase RihA, found in Salmonella paratyphi B (strain ATCC BAA-1250 / SPB7).